The primary structure comprises 252 residues: Diphthine synthase (252 aa).

S-adenosyl-L-methionine contacts are provided by residues L9, D85, V88, 113-114 (SI), L165, A204, and H229.

This sequence belongs to the diphthine synthase family. As to quaternary structure, homodimer.

It carries out the reaction 2-[(3S)-amino-3-carboxypropyl]-L-histidyl-[translation elongation factor 2] + 3 S-adenosyl-L-methionine = diphthine-[translation elongation factor 2] + 3 S-adenosyl-L-homocysteine + 3 H(+). The protein operates within protein modification; peptidyl-diphthamide biosynthesis. Functionally, S-adenosyl-L-methionine-dependent methyltransferase that catalyzes the trimethylation of the amino group of the modified target histidine residue in translation elongation factor 2 (EF-2), to form an intermediate called diphthine. The three successive methylation reactions represent the second step of diphthamide biosynthesis. The sequence is that of Diphthine synthase from Methanocorpusculum labreanum (strain ATCC 43576 / DSM 4855 / Z).